The sequence spans 132 residues: Small ribosomal subunit protein uS8 (132 aa).

This sequence belongs to the universal ribosomal protein uS8 family. As to quaternary structure, part of the 30S ribosomal subunit. Contacts proteins S5 and S12.

In terms of biological role, one of the primary rRNA binding proteins, it binds directly to 16S rRNA central domain where it helps coordinate assembly of the platform of the 30S subunit. This is Small ribosomal subunit protein uS8 from Afipia carboxidovorans (strain ATCC 49405 / DSM 1227 / KCTC 32145 / OM5) (Oligotropha carboxidovorans).